A 436-amino-acid polypeptide reads, in one-letter code: Glutamyl-tRNA reductase (436 aa).

Substrate is bound by residues 49–52 (TCNR), Ser109, 114–116 (EGQ), and Gln120. The active-site Nucleophile is the Cys50. Position 198 to 203 (198 to 203 (GAGRMS)) interacts with NADP(+).

Belongs to the glutamyl-tRNA reductase family. Homodimer.

The enzyme catalyses (S)-4-amino-5-oxopentanoate + tRNA(Glu) + NADP(+) = L-glutamyl-tRNA(Glu) + NADPH + H(+). Its pathway is porphyrin-containing compound metabolism; protoporphyrin-IX biosynthesis; 5-aminolevulinate from L-glutamyl-tRNA(Glu): step 1/2. The protein operates within porphyrin-containing compound metabolism; chlorophyll biosynthesis. Catalyzes the NADPH-dependent reduction of glutamyl-tRNA(Glu) to glutamate 1-semialdehyde (GSA). The polypeptide is Glutamyl-tRNA reductase (Prochlorococcus marinus (strain MIT 9313)).